Here is a 503-residue protein sequence, read N- to C-terminus: Basic immunoglobulin-like variable motif-containing protein (503 aa).

Over residues 1–26 (MPNVAETERSNDSGNGEHKSERKSPE) the composition is skewed to basic and acidic residues. Disordered stretches follow at residues 1–33 (MPNV…QGAV), 152–184 (TTNS…ECPQ), and 438–469 (ESQP…GRSF). Positions 155–172 (SKHKSGNAKKQVSKRKTS) are enriched in basic residues. A compositionally biased stretch (basic and acidic residues) spans 173–184 (DKKGRYQKECPQ).

This sequence belongs to the BIVM family. Widely expressed. Expressed at higher level in spleen, ovary, small intestine, colon, peripheral blood leukocytes and liver. Also expressed in testis, ovary, aorta, appendix, trachea, pituitary gland, bladder, uterus, spinal cord, salivary gland, stomach, mammary gland and bone marrow. Weakly or not expressed in fetal spleen, adult thymus and certain cancer cell lines.

The protein resides in the cytoplasm. It localises to the nucleus. This chain is Basic immunoglobulin-like variable motif-containing protein (BIVM), found in Homo sapiens (Human).